The sequence spans 499 residues: Glutamyl-tRNA(Gln) amidotransferase subunit A (499 aa).

Residues Lys79 and Ser159 each act as charge relay system in the active site. The Acyl-ester intermediate role is filled by Ser183.

This sequence belongs to the amidase family. GatA subfamily. Heterotrimer of A, B and C subunits.

It catalyses the reaction L-glutamyl-tRNA(Gln) + L-glutamine + ATP + H2O = L-glutaminyl-tRNA(Gln) + L-glutamate + ADP + phosphate + H(+). Its function is as follows. Allows the formation of correctly charged Gln-tRNA(Gln) through the transamidation of misacylated Glu-tRNA(Gln) in organisms which lack glutaminyl-tRNA synthetase. The reaction takes place in the presence of glutamine and ATP through an activated gamma-phospho-Glu-tRNA(Gln). The chain is Glutamyl-tRNA(Gln) amidotransferase subunit A from Granulibacter bethesdensis (strain ATCC BAA-1260 / CGDNIH1).